We begin with the raw amino-acid sequence, 92 residues long: Cell division topological specificity factor (92 aa).

This sequence belongs to the MinE family.

Functionally, prevents the cell division inhibition by proteins MinC and MinD at internal division sites while permitting inhibition at polar sites. This ensures cell division at the proper site by restricting the formation of a division septum at the midpoint of the long axis of the cell. The sequence is that of Cell division topological specificity factor from Symbiobacterium thermophilum (strain DSM 24528 / JCM 14929 / IAM 14863 / T).